A 207-amino-acid polypeptide reads, in one-letter code: Histone H1 (207 aa).

The segment covering 1–15 has biased composition (low complexity); it reads MAEVAPAPAAAAPAK. Disordered stretches follow at residues 1-28 and 105-207; these read MAEV…PKKA and EAKK…PKKK. Ala-2 carries the post-translational modification N-acetylalanine. The span at 16-27 shows a compositional bias: basic residues; that stretch reads APKKKAAAKPKK. One can recognise an H15 domain in the interval 28–101; the sequence is AGPSVGELIV…GASGSFKLNK (74 aa). 2 stretches are compositionally biased toward basic residues: residues 117-168 and 175-207; these read KAKK…KVKK and KAAK…PKKK.

This sequence belongs to the histone H1/H5 family. As to expression, oncorhyncin II is expressed in skin.

The protein resides in the nucleus. Its subcellular location is the chromosome. It localises to the secreted. Histones H1 are necessary for the condensation of nucleosome chains into higher-order structures. In terms of biological role, oncorhyncin II has antibacterial activity against Gram-positive and Gram-negative bacteria at submicromolar concentrations. Potentially important role in mucosal defense. This Oncorhynchus mykiss (Rainbow trout) protein is Histone H1.